Reading from the N-terminus, the 491-residue chain is Acetyl-coenzyme A carboxylase carboxyl transferase subunit beta, chloroplastic (491 aa).

Residues 224–491 form the CoA carboxyltransferase N-terminal domain; it reads LWIQCENCYG…FFPLNPKKIK (268 aa). Residues C228, C231, C247, and C250 each coordinate Zn(2+). The C4-type zinc-finger motif lies at 228 to 250; that stretch reads CENCYGLNYKKNLKSKINICEQC.

This sequence belongs to the AccD/PCCB family. Acetyl-CoA carboxylase is a heterohexamer composed of biotin carboxyl carrier protein, biotin carboxylase and 2 subunits each of ACCase subunit alpha and ACCase plastid-coded subunit beta (accD). Zn(2+) is required as a cofactor.

It is found in the plastid. The protein localises to the chloroplast stroma. The catalysed reaction is N(6)-carboxybiotinyl-L-lysyl-[protein] + acetyl-CoA = N(6)-biotinyl-L-lysyl-[protein] + malonyl-CoA. It functions in the pathway lipid metabolism; malonyl-CoA biosynthesis; malonyl-CoA from acetyl-CoA: step 1/1. Its function is as follows. Component of the acetyl coenzyme A carboxylase (ACC) complex. Biotin carboxylase (BC) catalyzes the carboxylation of biotin on its carrier protein (BCCP) and then the CO(2) group is transferred by the transcarboxylase to acetyl-CoA to form malonyl-CoA. In Vitis vinifera (Grape), this protein is Acetyl-coenzyme A carboxylase carboxyl transferase subunit beta, chloroplastic.